The following is a 705-amino-acid chain: Elongation factor G (705 aa).

Positions 8 to 290 (HRYRNIGIMA…GVIHLLPSPA (283 aa)) constitute a tr-type G domain. GTP is bound by residues 17–24 (AHIDAGKT), 88–92 (DTPGH), and 142–145 (NKMD).

This sequence belongs to the TRAFAC class translation factor GTPase superfamily. Classic translation factor GTPase family. EF-G/EF-2 subfamily.

It localises to the cytoplasm. In terms of biological role, catalyzes the GTP-dependent ribosomal translocation step during translation elongation. During this step, the ribosome changes from the pre-translocational (PRE) to the post-translocational (POST) state as the newly formed A-site-bound peptidyl-tRNA and P-site-bound deacylated tRNA move to the P and E sites, respectively. Catalyzes the coordinated movement of the two tRNA molecules, the mRNA and conformational changes in the ribosome. The protein is Elongation factor G of Xylella fastidiosa (strain M12).